Here is a 433-residue protein sequence, read N- to C-terminus: Serine hydroxymethyltransferase (433 aa).

(6S)-5,6,7,8-tetrahydrofolate is bound by residues Leu132 and 136–138 (GHL). Lys241 carries the post-translational modification N6-(pyridoxal phosphate)lysine.

The protein belongs to the SHMT family. As to quaternary structure, homodimer. Pyridoxal 5'-phosphate is required as a cofactor.

Its subcellular location is the cytoplasm. The catalysed reaction is (6R)-5,10-methylene-5,6,7,8-tetrahydrofolate + glycine + H2O = (6S)-5,6,7,8-tetrahydrofolate + L-serine. It functions in the pathway one-carbon metabolism; tetrahydrofolate interconversion. Its pathway is amino-acid biosynthesis; glycine biosynthesis; glycine from L-serine: step 1/1. In terms of biological role, catalyzes the reversible interconversion of serine and glycine with tetrahydrofolate (THF) serving as the one-carbon carrier. This reaction serves as the major source of one-carbon groups required for the biosynthesis of purines, thymidylate, methionine, and other important biomolecules. Also exhibits THF-independent aldolase activity toward beta-hydroxyamino acids, producing glycine and aldehydes, via a retro-aldol mechanism. This chain is Serine hydroxymethyltransferase, found in Rhodopseudomonas palustris (strain BisA53).